The following is a 425-amino-acid chain: RNA polymerase II-associated factor 1 homolog (425 aa).

A coiled-coil region spans residues 152–174 (KKNQQVEDMYRDKQSQIDAINKT). The segment at 331-425 (SRKSKLTLTY…KEPTVDSDSD (95 aa)) is disordered. Basic and acidic residues-rich tracts occupy residues 344–380 (SELE…KEEG) and 393–402 (DKPQKSRSDS).

It belongs to the PAF1 family. Component of the PAF1 complex which consists of at least cdc-73, ctr-9, leo-1, pafo-1 and rtfo-1.

It is found in the nucleus. In terms of biological role, component of the PAF1 complex which is a multifunctional complex involved in transcription initiation via genetic interactions with TATA-binding proteins, elongation and transcription-coupled histone modification. The polypeptide is RNA polymerase II-associated factor 1 homolog (Caenorhabditis elegans).